A 142-amino-acid chain; its full sequence is Large ribosomal subunit protein uL11 (142 aa).

Belongs to the universal ribosomal protein uL11 family. As to quaternary structure, part of the ribosomal stalk of the 50S ribosomal subunit. Interacts with L10 and the large rRNA to form the base of the stalk. L10 forms an elongated spine to which L12 dimers bind in a sequential fashion forming a multimeric L10(L12)X complex. Post-translationally, one or more lysine residues are methylated.

Forms part of the ribosomal stalk which helps the ribosome interact with GTP-bound translation factors. This chain is Large ribosomal subunit protein uL11, found in Tolumonas auensis (strain DSM 9187 / NBRC 110442 / TA 4).